Here is a 129-residue protein sequence, read N- to C-terminus: Snaclec coagulation factor IX-binding protein subunit A (129 aa).

In terms of domain architecture, C-type lectin spans 1–129 (DCPSGWSSYE…GQQNPFVCEA (129 aa)). Cystine bridges form between C2–C13, C30–C127, and C102–C119. Ca(2+) contacts are provided by S41, E43, and E47. Residue E128 coordinates Ca(2+).

The protein belongs to the snaclec family. As to quaternary structure, heterodimer of subunits A and B; disulfide-linked. As to expression, expressed by the venom gland.

The protein resides in the secreted. Anticoagulant protein which binds to the gamma-carboxyglutamic acid-domain regions of factor IX (F9) (but not factor X) in the presence of calcium with a 1 to 1 stoichiometry. The chain is Snaclec coagulation factor IX-binding protein subunit A from Protobothrops flavoviridis (Habu).